The chain runs to 205 residues: Holliday junction branch migration complex subunit RuvA (205 aa).

Residues 1–64 (MIGRLRGTLA…EDAHLLYGFA (64 aa)) are domain I. The interval 65–143 (EKRERELFRE…AWETSPAMFT (79 aa)) is domain II. The segment at 144–154 (LVSDGPLPVAS) is flexible linker. The domain III stretch occupies residues 154-205 (SESSAEADAVSALVSLGYKPQEASKAIAAIKDKAGLSSEELIRRSLKGMIAK).

The protein belongs to the RuvA family. Homotetramer. Forms an RuvA(8)-RuvB(12)-Holliday junction (HJ) complex. HJ DNA is sandwiched between 2 RuvA tetramers; dsDNA enters through RuvA and exits via RuvB. An RuvB hexamer assembles on each DNA strand where it exits the tetramer. Each RuvB hexamer is contacted by two RuvA subunits (via domain III) on 2 adjacent RuvB subunits; this complex drives branch migration. In the full resolvosome a probable DNA-RuvA(4)-RuvB(12)-RuvC(2) complex forms which resolves the HJ.

It localises to the cytoplasm. Its function is as follows. The RuvA-RuvB-RuvC complex processes Holliday junction (HJ) DNA during genetic recombination and DNA repair, while the RuvA-RuvB complex plays an important role in the rescue of blocked DNA replication forks via replication fork reversal (RFR). RuvA specifically binds to HJ cruciform DNA, conferring on it an open structure. The RuvB hexamer acts as an ATP-dependent pump, pulling dsDNA into and through the RuvAB complex. HJ branch migration allows RuvC to scan DNA until it finds its consensus sequence, where it cleaves and resolves the cruciform DNA. The protein is Holliday junction branch migration complex subunit RuvA of Pseudomonas entomophila (strain L48).